The primary structure comprises 1969 residues: Cytadherence high molecular weight protein 1 (1969 aa).

An HAT 1 repeat occupies 148 to 166 (YYDENEEWVWTGYFDEDNK). Residues 174 to 244 (KPAEVEALEE…QPESEQEGSG (71 aa)) are disordered. 2 stretches are compositionally biased toward acidic residues: residues 179-207 (EALE…EVVE) and 214-242 (QPEE…EQEG). HAT repeat units lie at residues 258 to 278 (YYDE…NNFV), 300 to 331 (AQQE…VEGY), and 333 to 353 (YYDE…NNFV). The tract at residues 294–319 (QVEEYSAQQEQVQEEYEQQPEQEGSG) is disordered. A disordered region spans residues 365-393 (VSEEQYSESVSEEQEPASEEQVAEEPAQV). Acidic residues predominate over residues 374–387 (VSEEQEPASEEQVA). HAT repeat units follow at residues 477-497 (YYDE…GMFI) and 959-997 (LTLV…DQNN). Residues 1000-1027 (SDKDSKTQKVDQLIEEFNKQEAIKKTEE) are a coiled coil. One copy of the HAT 7 repeat lies at 1029 to 1067 (EAKKASEPFYNKYIGNKQFGYYNDKNVWIWNGYFDENDQ). Coiled-coil stretches lie at residues 1082-1190 (IEDE…FDNF), 1547-1621 (SVNQ…LALT), and 1758-1790 (NRGD…NKKV).

It is found in the cell projection. It localises to the attachment organelle membrane. Its function is as follows. Component of the cytoskeleton-like structure which stabilizes the shape of the wall-less Mycoplasma. This cytoskeleton-like network of accessory proteins containing HMW proteins 1 to 5 allows the proper anchoring of cytadhesin proteins in the mycoplasmal membrane at the attachment organelle. The sequence is that of Cytadherence high molecular weight protein 1 (hlp1) from Mycoplasmoides gallisepticum (strain R(low / passage 15 / clone 2)) (Mycoplasma gallisepticum).